A 111-amino-acid polypeptide reads, in one-letter code: Ribosome-binding factor A (111 aa).

This sequence belongs to the RbfA family. As to quaternary structure, monomer. Binds 30S ribosomal subunits, but not 50S ribosomal subunits or 70S ribosomes.

The protein resides in the cytoplasm. Functionally, one of several proteins that assist in the late maturation steps of the functional core of the 30S ribosomal subunit. Associates with free 30S ribosomal subunits (but not with 30S subunits that are part of 70S ribosomes or polysomes). Required for efficient processing of 16S rRNA. May interact with the 5'-terminal helix region of 16S rRNA. The protein is Ribosome-binding factor A of Helicobacter acinonychis (strain Sheeba).